The sequence spans 262 residues: Phosphatidylserine decarboxylase proenzyme (262 aa).

Residues Asp86, His142, and Ser226 each act as charge relay system; for autoendoproteolytic cleavage activity in the active site. Ser226 (schiff-base intermediate with substrate; via pyruvic acid; for decarboxylase activity) is an active-site residue. Ser226 is subject to Pyruvic acid (Ser); by autocatalysis.

This sequence belongs to the phosphatidylserine decarboxylase family. PSD-B subfamily. Prokaryotic type I sub-subfamily. As to quaternary structure, heterodimer of a large membrane-associated beta subunit and a small pyruvoyl-containing alpha subunit. Requires pyruvate as cofactor. In terms of processing, is synthesized initially as an inactive proenzyme. Formation of the active enzyme involves a self-maturation process in which the active site pyruvoyl group is generated from an internal serine residue via an autocatalytic post-translational modification. Two non-identical subunits are generated from the proenzyme in this reaction, and the pyruvate is formed at the N-terminus of the alpha chain, which is derived from the carboxyl end of the proenzyme. The autoendoproteolytic cleavage occurs by a canonical serine protease mechanism, in which the side chain hydroxyl group of the serine supplies its oxygen atom to form the C-terminus of the beta chain, while the remainder of the serine residue undergoes an oxidative deamination to produce ammonia and the pyruvoyl prosthetic group on the alpha chain. During this reaction, the Ser that is part of the protease active site of the proenzyme becomes the pyruvoyl prosthetic group, which constitutes an essential element of the active site of the mature decarboxylase.

Its subcellular location is the cell membrane. The enzyme catalyses a 1,2-diacyl-sn-glycero-3-phospho-L-serine + H(+) = a 1,2-diacyl-sn-glycero-3-phosphoethanolamine + CO2. The protein operates within phospholipid metabolism; phosphatidylethanolamine biosynthesis; phosphatidylethanolamine from CDP-diacylglycerol: step 2/2. Catalyzes the formation of phosphatidylethanolamine (PtdEtn) from phosphatidylserine (PtdSer). The polypeptide is Phosphatidylserine decarboxylase proenzyme (Bacillus cereus (strain ATCC 10987 / NRS 248)).